A 315-amino-acid chain; its full sequence is Calumenin-A (315 aa).

Positions M1–S19 are cleaved as a signal peptide. EF-hand domains follow at residues E68–K103, Y104–D139, H151–D186, M188–E223, W229–D264, and H265–S300. Ca(2+) contacts are provided by D81, D83, D85, E92, D117, N119, D121, M123, and E128. N-linked (GlcNAc...) asparagine glycosylation occurs at N131. D164, N166, D168, E175, D201, N203, D205, E212, D242, N244, D246, K248, E253, D278, N280, D282, K284, and E289 together coordinate Ca(2+). The Prevents secretion from ER signature appears at H312–F315.

The protein belongs to the CREC family. As to quaternary structure, interacts with ggcx.

The protein localises to the endoplasmic reticulum membrane. The protein resides in the golgi apparatus. It is found in the secreted. Its subcellular location is the melanosome. It localises to the sarcoplasmic reticulum lumen. In terms of biological role, involved in regulation of vitamin K-dependent carboxylation of multiple N-terminal glutamate residues. Seems to inhibit gamma-carboxylase ggcx. Binds 7 calcium ions with a low affinity. In Salmo salar (Atlantic salmon), this protein is Calumenin-A (calua).